The chain runs to 199 residues: MLVPIVVEQTGRGERSYDIYSRLLKDRIIFLGGGIDDNVANLVIAQLLFLEAEDPDKDIHLYINSPGGVVTAGMAIYDTMRYIKAPVSTICVGQAASMGAFLLSGGEKGKRYSLVNSRIMIHQPLGGFQGQATDIHIHAKEILRMKDQLNALLAEHTGQSVEKVAADTERDYFMSGEEAKNYGIIDAIVTRNVVTGGAN.

The Nucleophile role is filled by Ser-97. The active site involves His-122.

The protein belongs to the peptidase S14 family. Fourteen ClpP subunits assemble into 2 heptameric rings which stack back to back to give a disk-like structure with a central cavity, resembling the structure of eukaryotic proteasomes.

It is found in the cytoplasm. The catalysed reaction is Hydrolysis of proteins to small peptides in the presence of ATP and magnesium. alpha-casein is the usual test substrate. In the absence of ATP, only oligopeptides shorter than five residues are hydrolyzed (such as succinyl-Leu-Tyr-|-NHMec, and Leu-Tyr-Leu-|-Tyr-Trp, in which cleavage of the -Tyr-|-Leu- and -Tyr-|-Trp bonds also occurs).. Cleaves peptides in various proteins in a process that requires ATP hydrolysis. Has a chymotrypsin-like activity. Plays a major role in the degradation of misfolded proteins. The polypeptide is ATP-dependent Clp protease proteolytic subunit (Citrifermentans bemidjiense (strain ATCC BAA-1014 / DSM 16622 / JCM 12645 / Bem) (Geobacter bemidjiensis)).